The sequence spans 238 residues: CBS domain-containing protein CBSX2, chloroplastic (238 aa).

The N-terminal 71 residues, 1–71 (MGSISLSNSM…ASVNNNNSVP (71 aa)), are a transit peptide targeting the chloroplast. CBS domains follow at residues 83–145 (MTPR…QNDT) and 177–234 (MTPS…KRET).

Its subcellular location is the plastid. The protein resides in the chloroplast stroma. This is CBS domain-containing protein CBSX2, chloroplastic (CBSX2) from Arabidopsis thaliana (Mouse-ear cress).